A 157-amino-acid polypeptide reads, in one-letter code: MGVIEFLLALAQDMILAAIPAVGFAMVFNVPVRALRWCALLGSIGHGSRMILMTSGLNIEWSTFMASMLGGTIGIQWSRWYLAHPKVFTVAAVIPMFPGISAYTAMISAVKISQLGYSEPLMITLLTNFLTASSIVGALSIGLSIPGLWLYRKRPRV.

The next 4 membrane-spanning stretches (helical) occupy residues Leu-8–Phe-28, Met-50–Gly-70, Val-87–Ile-107, and Phe-129–Trp-149.

Belongs to the ThrE exporter (TC 2.A.79) family. The transporter is composed of YjjB and YjjP.

It is found in the cell inner membrane. In terms of biological role, involved in succinate export with YjjP. Both proteins are required for export. This chain is Probable succinate transporter subunit YjjB, found in Escherichia coli O157:H7 (strain EC4115 / EHEC).